A 214-amino-acid chain; its full sequence is Nigrelysin (214 aa).

The first 21 residues, methionine 1–alanine 21, serve as a signal peptide directing secretion. Positions leucine 22 to arginine 35 are excised as a propeptide. The interval glutamate 38–alanine 47 is plays an important role in the hemolytic activity. An N-terminal region region spans residues glycine 46–serine 65. Positions 89, 122, 140, 142, 168, 172, and 173 each coordinate phosphocholine. The trp-rich region, which is important for the binding to lipid membrane stretch occupies residues serine 140–lysine 155. The short motif at lysine 179 to aspartate 181 is the Cell attachment site, crucial for protein stability element.

It belongs to the actinoporin family. Sea anemone subfamily. In terms of assembly, octamer or nonamer in membranes. Monomer in the soluble state.

Its subcellular location is the secreted. The protein resides in the nematocyst. It is found in the target cell membrane. Its function is as follows. Pore-forming protein that forms cation-selective hydrophilic pores in cell membranes and causes cytolysis. Pore formation is a multi-step process that involves specific recognition of membrane sphingomyelin (but neither cholesterol nor phosphatidylcholine) using aromatic rich region and adjacent phosphocholine (POC) binding site, firm binding to the membrane (mainly driven by hydrophobic interactions) accompanied by the transfer of the N-terminal region to the lipid-water interface and finally pore formation after oligomerization of monomers. This protein shows potent hemolytic activity (EC(50)=0.09 nM), as well as potent cytotoxic activity on nucleated cells (L1210 cells). The cytotoxic process starts with cellular swelling that is time and dose dependent and occurs up to a critical volume, probably due to influx of water via pores opened by this actinoporin. The second phase consists of the final loss of membrane integrity that leads to cytolysis. The polypeptide is Nigrelysin (Anthopleura nigrescens (Sea anemone)).